Here is a 24-residue protein sequence, read N- to C-terminus: Ascaphin-4 (24 aa).

As to expression, expressed by the skin glands.

It localises to the secreted. Functionally, antimicrobial peptide that shows higher potency against Gram-negative bacteria than against Gram-positive bacteria. Has a very week hemolytic activity. The chain is Ascaphin-4 from Ascaphus truei (Coastal tailed frog).